The chain runs to 771 residues: Probable exo-1,4-beta-xylosidase bxlB (771 aa).

A signal peptide spans 1–25 (MAHITSWHYGNAIALLVSLAPGALS). N-linked (GlcNAc...) asparagine glycosylation is present at N67. The active site involves D293. N305, N345, N423, and N464 each carry an N-linked (GlcNAc...) asparagine glycan.

The protein belongs to the glycosyl hydrolase 3 family.

It is found in the secreted. It catalyses the reaction Hydrolysis of (1-&gt;4)-beta-D-xylans, to remove successive D-xylose residues from the non-reducing termini.. It participates in glycan degradation; xylan degradation. Its function is as follows. Xylan 1,4-beta-xylosidase involved in the hydrolysis of xylan, a major structural heterogeneous polysaccharide found in plant biomass representing the second most abundant polysaccharide in the biosphere, after cellulose. The protein is Probable exo-1,4-beta-xylosidase bxlB (bxlB) of Aspergillus fumigatus (strain CBS 144.89 / FGSC A1163 / CEA10) (Neosartorya fumigata).